Reading from the N-terminus, the 894-residue chain is MEKQEILREFSSDPEKYYTVRLFREEGFERRACSVCGRYFWALDGRPACPEDSDDTYSFIGDPPAPRAYDYAQAWRTIEEYFVKNGHESVPRYPVVCRWRDDLYFTIASIVDFQRVMGSSVVFEFPANPLVVPQTCLRFKDLENVGVTGRHFSSFCMIGQHAVPGNGGYWKDECIDLDYGLLVRQLGIPKEEVVFVEDVWAGGGSFGPSLEYYVRGLELGNAVFTEFQGELGNHTTLDRRIIDMGAGLERFAWITTGTPTAYDCCFGPVMGRLAESLGADQDSAELAAYYTRVAVNLGRCGDLNEARRRSAQEAGISDSRMAGAIAPLGEAYMVADHIRTLIFAISDGALPSNVGGGYNLRMMLRRVAGAMERTFPGLDLDELVDLHIDYLMGTYPELDGARQDVKTILDIEASRYGDSKERMGKITAKITDRGRAPGVDELVTLYESDGITPEYLIEAGAIQEVPPEFYSRLDELHAPPPKAAGPGPELAGLADTEMLFYGEDPPEFEARVMHSSDGGVVLDRTSFYARGGGQEPDHGTIGGFRVTDVSKHGGIILHRLDGGSLAEGSTVRCIRDEKRRAGITRNHTSTHILNASARGVLGSWVWQHSAFKEEDHARLDITHHSPLSAAEVKKIEAAANGIVKEDRGVSIGYHPRGEAEQKYGFRIYQGGVVPVSTVRIVTIKGYDDEACGGTHVKSTGEVGLIRITRTKRIQDGVVRLEFVSGDAAIEHERTAAARAEGDRAAEEAKGRLQEERDAGRLKSREIIPGMLEEITGGGSAEGMEVATGPGGRRCLAAGIHDEYFHTSFGKKLVAMDPACAYCAIFEAGPTVRVLAYAGSKSGAGADEIVREVSAVLGGSGGGAAGFAQGGGKDSSKMAEAVARARVLLFGGDNT.

Zn(2+)-binding residues include His587, His591, Cys691, and His695. The tract at residues 739–758 (AEGDRAAEEAKGRLQEERDA) is disordered.

It belongs to the class-II aminoacyl-tRNA synthetase family. The cofactor is Zn(2+).

The protein resides in the cytoplasm. It carries out the reaction tRNA(Ala) + L-alanine + ATP = L-alanyl-tRNA(Ala) + AMP + diphosphate. Catalyzes the attachment of alanine to tRNA(Ala) in a two-step reaction: alanine is first activated by ATP to form Ala-AMP and then transferred to the acceptor end of tRNA(Ala). Also edits incorrectly charged Ser-tRNA(Ala) and Gly-tRNA(Ala) via its editing domain. The polypeptide is Alanine--tRNA ligase (Cenarchaeum symbiosum (strain A)).